The sequence spans 361 residues: Histidinol-phosphate aminotransferase (361 aa).

At Lys219 the chain carries N6-(pyridoxal phosphate)lysine.

The protein belongs to the class-II pyridoxal-phosphate-dependent aminotransferase family. Histidinol-phosphate aminotransferase subfamily. In terms of assembly, homodimer. Pyridoxal 5'-phosphate serves as cofactor.

The enzyme catalyses L-histidinol phosphate + 2-oxoglutarate = 3-(imidazol-4-yl)-2-oxopropyl phosphate + L-glutamate. It functions in the pathway amino-acid biosynthesis; L-histidine biosynthesis; L-histidine from 5-phospho-alpha-D-ribose 1-diphosphate: step 7/9. The chain is Histidinol-phosphate aminotransferase from Acinetobacter baylyi (strain ATCC 33305 / BD413 / ADP1).